A 192-amino-acid chain; its full sequence is uncharacterized protein (192 aa).

In terms of domain architecture, Nudix hydrolase spans arginine 29–aspartate 160. A Nudix box motif is present at residues glycine 67–alanine 89. Mg(2+)-binding residues include glutamate 83 and glutamate 87.

The protein belongs to the Nudix hydrolase family. PCD1 subfamily. It depends on Mn(2+) as a cofactor. Mg(2+) is required as a cofactor.

Probably mediates the hydrolysis of some nucleoside diphosphate derivatives. This is an uncharacterized protein from Enterobacter sp. (strain 638).